Here is a 692-residue protein sequence, read N- to C-terminus: Ino eighty subunit 1 (692 aa).

Over residues M1–A25 the composition is skewed to basic and acidic residues. Positions M1–P133 are disordered. A Phosphoserine modification is found at S27. A compositionally biased stretch (polar residues) spans P28–S56. Acidic residues predominate over residues E64–N80. Positions G97–T109 are enriched in polar residues. Residues S340–L385 are a coiled coil. Residues F465 to K485 are compositionally biased toward basic and acidic residues. Residues F465–E550 form a disordered region. Phosphoserine is present on residues S487, S493, and S504. Positions S493–S504 are enriched in acidic residues. T507 bears the Phosphothreonine mark. Positions S513–T528 are enriched in polar residues.

As to quaternary structure, component of the chromatin-remodeling INO80 complex, at least composed of ARP4, ARP5, ARP8, RVB1, RVB2, TAF14, NHP10, IES1, IES3, IES4, IES6, ACT1, IES2, IES5 and INO80.

The protein resides in the nucleus. Functionally, probably involved in transcription regulation via its interaction with the INO80 complex, a chromatin-remodeling complex. In Saccharomyces cerevisiae (strain ATCC 204508 / S288c) (Baker's yeast), this protein is Ino eighty subunit 1 (IES1).